The chain runs to 263 residues: Meiotic drive suppressor wtf6 (263 aa).

A disordered region spans residues 1–68; that stretch reads MKNNYTSLKS…REKNPSRSTD (68 aa). A compositionally biased stretch (basic and acidic residues) spans 19–30; it reads KTDHEIDLEKGP. The next 3 helical transmembrane spans lie at 73 to 93, 110 to 130, and 201 to 221; these read FLIKLLISFTSIILFNAPAVC, WTLFGFWCLVCTLALISLTYF, and SASAFTFMAVSSILIFIAETV.

Belongs to the WTF family. Homomer. Interacts with other proteins that exhibit high sequence similarity.

Its subcellular location is the spore membrane. The protein localises to the vacuole membrane. Its function is as follows. Acts as a suppressor component of the dual wtf meiotic drive system, and can suppress but not confer meiotic drive by compatible poisons. Wtf meiotic drive systems promote unequal transmission of alleles from the parental zygote to progeny spores by encoding a poison and an antidote from the same locus; the poison is trans-acting and forms toxic aggregates in all spores within an ascus, wherease the antidote is spore-specific and targets aggregates for degradation by the vacuole. Meiotic drive by wtf systems therefore lead to poisoning of all progeny that do not inherit the dual poison/antidote allele, or express a compatible antidote. The chain is Meiotic drive suppressor wtf6 from Schizosaccharomyces kambucha (Fission yeast).